The sequence spans 390 residues: MAQKEGLPAGRLSAMVIDEDKCHADSTSYMLSAELNFSVTVFTSPIKALDFLQNHAEGVDLVLADVHMEEMNGFDFLKVARELHKSIQVIMMSTETTMYTMKRCVKLGAQFLVNKPLDAGTIKNLWQYVDLKVLRMEKIKDLLQGIGDESTCANETNSLAENPKNDTKKKYYLMWTPHLQKKFLHALQILGKDASPKNIKKIMGVDNIDCRQIAAHLQKHRLRLTKDLKKASFTTDTSKDESNSRIGPAESHHVCRNASTLQPRSNTQPTETTMQILSEDAEYDDVYAAMRRALQYGIVFDESKHSSDPSGDEDEQVVVGGDQDGCANEANDIDSSGDHHQVAAVVTKPCNTNASQEIINKMTNSDGMQATKGSKAAVFRLVDYSESDSD.

The Response regulatory domain maps to 13–130 (SAMVIDEDKC…TIKNLWQYVD (118 aa)). 4-aspartylphosphate is present on D65. Residues 169–226 (KKYYLMWTPHLQKKFLHALQILGKDASPKNIKKIMGVDNIDCRQIAAHLQKHRLRLTK) constitute a DNA-binding region (myb-like GARP). Disordered regions lie at residues 233–271 (FTTD…QPTE) and 303–339 (SKHS…SGDH). Over residues 257–271 (NASTLQPRSNTQPTE) the composition is skewed to polar residues.

The protein belongs to the ARR family. Type-B subfamily. Two-component system major event consists of a His-to-Asp phosphorelay between a sensor histidine kinase (HK) and a response regulator (RR). In plants, the His-to-Asp phosphorelay involves an additional intermediate named Histidine-containing phosphotransfer protein (HPt). This multistep phosphorelay consists of a His-Asp-His-Asp sequential transfer of a phosphate group between first a His and an Asp of the HK protein, followed by the transfer to a conserved His of the HPt protein and finally the transfer to an Asp in the receiver domain of the RR protein.

It is found in the nucleus. Functionally, transcriptional activator that binds specific DNA sequence. Functions as a response regulator involved in His-to-Asp phosphorelay signal transduction system. Phosphorylation of the Asp residue in the receiver domain activates the ability of the protein to promote the transcription of target genes. May directly activate some type-A response regulators in response to cytokinins. The chain is Two-component response regulator ORR29 from Oryza sativa subsp. indica (Rice).